A 210-amino-acid chain; its full sequence is Guanylate kinase (210 aa).

Residues 6 to 184 enclose the Guanylate kinase-like domain; it reads GTLYIISAPS…ALQDLKCIIQ (179 aa). 13-20 lines the ATP pocket; the sequence is APSGAGKT.

This sequence belongs to the guanylate kinase family.

It localises to the cytoplasm. It catalyses the reaction GMP + ATP = GDP + ADP. Essential for recycling GMP and indirectly, cGMP. The protein is Guanylate kinase of Nitrosospira multiformis (strain ATCC 25196 / NCIMB 11849 / C 71).